The primary structure comprises 131 residues: UPF0102 protein YraN (131 aa).

Residues 1 to 19 (MATVPTRSGSPRQLTTKQT) show a composition bias toward polar residues. The disordered stretch occupies residues 1-21 (MATVPTRSGSPRQLTTKQTGD).

This sequence belongs to the UPF0102 family.

In Escherichia coli O127:H6 (strain E2348/69 / EPEC), this protein is UPF0102 protein YraN.